The sequence spans 218 residues: ATP-dependent Clp protease proteolytic subunit 2 (218 aa).

Ser-114 (nucleophile) is an active-site residue. The active site involves His-139.

This sequence belongs to the peptidase S14 family. Fourteen ClpP subunits assemble into 2 heptameric rings which stack back to back to give a disk-like structure with a central cavity, resembling the structure of eukaryotic proteasomes.

The protein localises to the cytoplasm. The enzyme catalyses Hydrolysis of proteins to small peptides in the presence of ATP and magnesium. alpha-casein is the usual test substrate. In the absence of ATP, only oligopeptides shorter than five residues are hydrolyzed (such as succinyl-Leu-Tyr-|-NHMec, and Leu-Tyr-Leu-|-Tyr-Trp, in which cleavage of the -Tyr-|-Leu- and -Tyr-|-Trp bonds also occurs).. In terms of biological role, cleaves peptides in various proteins in a process that requires ATP hydrolysis. Has a chymotrypsin-like activity. Plays a major role in the degradation of misfolded proteins. Probably partially responsible for degradation of ECF sigma factor SigR prime. In Streptomyces coelicolor (strain ATCC BAA-471 / A3(2) / M145), this protein is ATP-dependent Clp protease proteolytic subunit 2.